We begin with the raw amino-acid sequence, 328 residues long: Probable GDP-L-fucose synthase 1 (328 aa).

25 to 31 lines the NADP(+) pocket; that stretch reads GHRGLVG. Y152 acts as the Proton donor/acceptor in catalysis. Residues K156, 179–182, and H195 each bind NADP(+); that span reads PTNL. The substrate site is built by R203, W218, R225, and D285.

This sequence belongs to the NAD(P)-dependent epimerase/dehydratase family. Fucose synthase subfamily. As to quaternary structure, homodimer.

It carries out the reaction GDP-beta-L-fucose + NADP(+) = GDP-4-dehydro-alpha-D-rhamnose + NADPH + H(+). Its pathway is nucleotide-sugar biosynthesis; GDP-L-fucose biosynthesis via de novo pathway; GDP-L-fucose from GDP-alpha-D-mannose: step 2/2. In terms of biological role, catalyzes the two-step NADP-dependent conversion of GDP-4-dehydro-6-deoxy-D-mannose to GDP-fucose, involving an epimerase and a reductase reaction. The polypeptide is Probable GDP-L-fucose synthase 1 (Oryza sativa subsp. japonica (Rice)).